We begin with the raw amino-acid sequence, 113 residues long: Large ribosomal subunit protein uL22 (113 aa).

It belongs to the universal ribosomal protein uL22 family. As to quaternary structure, part of the 50S ribosomal subunit.

This protein binds specifically to 23S rRNA; its binding is stimulated by other ribosomal proteins, e.g. L4, L17, and L20. It is important during the early stages of 50S assembly. It makes multiple contacts with different domains of the 23S rRNA in the assembled 50S subunit and ribosome. In terms of biological role, the globular domain of the protein is located near the polypeptide exit tunnel on the outside of the subunit, while an extended beta-hairpin is found that lines the wall of the exit tunnel in the center of the 70S ribosome. This Thermus thermophilus (strain ATCC BAA-163 / DSM 7039 / HB27) protein is Large ribosomal subunit protein uL22.